A 339-amino-acid polypeptide reads, in one-letter code: MLHSIALRFEDDVTYFITSSEHETVADAAYQHGIRIPLDCRNGVCGTCKGFCEHGEYDGGDYIEDALSADEAREGFVLPCQMQARTDCVVRILASSSACQVKKSTMTGQMTEIDRGSSSTLQFTLAIDPSSKVDFLPGQYAQLRIPGTTESRAYSYSSMPGSSHVTFLVRDVPNGKMSGYLRNQATITETFTFDGPYGAFYLREPVRPILMLAGGTGLAPFLSMLQYMAGLQRNDLPSVRLVYGVNRDDDLVGLDKLDELATQLSGFSYITTVVDKDSAQLRRGYVTQQITNDDMNGGDVDIYVCGPPPMVEAVRSWLAAEKLNPVNFYFEKFAPTVGN.

The 2Fe-2S ferredoxin-type domain maps to 3-96 (HSIALRFEDD…DCVVRILASS (94 aa)). [2Fe-2S] cluster is bound by residues cysteine 40, cysteine 45, cysteine 48, and cysteine 80. The segment at 98–336 (ACQVKKSTMT…NFYFEKFAPT (239 aa)) is ferredoxin-reductase. The FAD-binding FR-type domain occupies 103 to 203 (KSTMTGQMTE…DGPYGAFYLR (101 aa)).

This sequence belongs to the bacterial ring-hydroxylating dioxygenase ferredoxin reductase family. Monomer. It is part of 2-halobenzoate dioxygenase two component enzyme system. The other component is a dioxygenase component consisting of 3 large (CbdA) subunits and 3 small (CbdB) subunits. FAD is required as a cofactor. The cofactor is [2Fe-2S] cluster.

It carries out the reaction 2 reduced [2Fe-2S]-[ferredoxin] + NAD(+) + H(+) = 2 oxidized [2Fe-2S]-[ferredoxin] + NADH. The protein operates within xenobiotic degradation; benzoate degradation via CoA ligation. Functionally, electron transfer component of 2-halobenzoate 1,2-dioxygenase system. This is 2-halobenzoate 1,2-dioxygenase electron transfer component (cbdC) from Burkholderia cepacia (Pseudomonas cepacia).